The sequence spans 172 residues: Scytalone dehydratase-like protein Arp1 (172 aa).

Y49 provides a ligand contact to substrate. Catalysis depends on residues H84 and H109. N130 is a substrate binding site.

The protein belongs to the scytalone dehydratase family. In terms of assembly, homotrimer. Each subunit contains an active site, located in the central part of the hydrophobic core of the monomer, which functions independently.

Functionally, scytalone dehydratase-like protein; part of the Pks2 gene cluster that mediates the formation of infectious structures (appressoria), enabling these fungi to kill insects faster. The product of the Pks2 gene cluster is different from the one of Pks1 and has still not been identified. In Metarhizium robertsii (strain ARSEF 23 / ATCC MYA-3075) (Metarhizium anisopliae (strain ARSEF 23)), this protein is Scytalone dehydratase-like protein Arp1.